A 251-amino-acid chain; its full sequence is tRNA1(Val) (adenine(37)-N6)-methyltransferase (251 aa).

This sequence belongs to the methyltransferase superfamily. tRNA (adenine-N(6)-)-methyltransferase family.

The protein resides in the cytoplasm. It carries out the reaction adenosine(37) in tRNA1(Val) + S-adenosyl-L-methionine = N(6)-methyladenosine(37) in tRNA1(Val) + S-adenosyl-L-homocysteine + H(+). Functionally, specifically methylates the adenine in position 37 of tRNA(1)(Val) (anticodon cmo5UAC). The sequence is that of tRNA1(Val) (adenine(37)-N6)-methyltransferase from Yersinia enterocolitica serotype O:8 / biotype 1B (strain NCTC 13174 / 8081).